The following is a 222-amino-acid chain: Phosphoribosylformylglycinamidine synthase subunit PurQ (222 aa).

The Glutamine amidotransferase type-1 domain maps to 3 to 222 (AAVVVFPGSN…RALTGALAAV (220 aa)). Residue cysteine 86 is the Nucleophile of the active site. Active-site residues include histidine 194 and glutamate 196.

Part of the FGAM synthase complex composed of 1 PurL, 1 PurQ and 2 PurS subunits.

It is found in the cytoplasm. The enzyme catalyses N(2)-formyl-N(1)-(5-phospho-beta-D-ribosyl)glycinamide + L-glutamine + ATP + H2O = 2-formamido-N(1)-(5-O-phospho-beta-D-ribosyl)acetamidine + L-glutamate + ADP + phosphate + H(+). It carries out the reaction L-glutamine + H2O = L-glutamate + NH4(+). The protein operates within purine metabolism; IMP biosynthesis via de novo pathway; 5-amino-1-(5-phospho-D-ribosyl)imidazole from N(2)-formyl-N(1)-(5-phospho-D-ribosyl)glycinamide: step 1/2. In terms of biological role, part of the phosphoribosylformylglycinamidine synthase complex involved in the purines biosynthetic pathway. Catalyzes the ATP-dependent conversion of formylglycinamide ribonucleotide (FGAR) and glutamine to yield formylglycinamidine ribonucleotide (FGAM) and glutamate. The FGAM synthase complex is composed of three subunits. PurQ produces an ammonia molecule by converting glutamine to glutamate. PurL transfers the ammonia molecule to FGAR to form FGAM in an ATP-dependent manner. PurS interacts with PurQ and PurL and is thought to assist in the transfer of the ammonia molecule from PurQ to PurL. The protein is Phosphoribosylformylglycinamidine synthase subunit PurQ of Roseobacter denitrificans (strain ATCC 33942 / OCh 114) (Erythrobacter sp. (strain OCh 114)).